Here is an 86-residue protein sequence, read N- to C-terminus: Exodeoxyribonuclease 7 small subunit (86 aa).

Positions 67 to 86 (LSDPAQPEASEPFDPPSHDG) are disordered.

Belongs to the XseB family. In terms of assembly, heterooligomer composed of large and small subunits.

It is found in the cytoplasm. It carries out the reaction Exonucleolytic cleavage in either 5'- to 3'- or 3'- to 5'-direction to yield nucleoside 5'-phosphates.. Bidirectionally degrades single-stranded DNA into large acid-insoluble oligonucleotides, which are then degraded further into small acid-soluble oligonucleotides. In Stenotrophomonas maltophilia (strain K279a), this protein is Exodeoxyribonuclease 7 small subunit.